The chain runs to 435 residues: 3-phosphoshikimate 1-carboxyvinyltransferase (435 aa).

3-phosphoshikimate contacts are provided by K22, S23, and R27. K22 lines the phosphoenolpyruvate pocket. Phosphoenolpyruvate-binding residues include G95 and R123. Residues S168, Q170, D319, and K346 each coordinate 3-phosphoshikimate. Q170 is a phosphoenolpyruvate binding site. Catalysis depends on D319, which acts as the Proton acceptor. Phosphoenolpyruvate contacts are provided by R350 and R393.

This sequence belongs to the EPSP synthase family. In terms of assembly, monomer.

The protein resides in the cytoplasm. It carries out the reaction 3-phosphoshikimate + phosphoenolpyruvate = 5-O-(1-carboxyvinyl)-3-phosphoshikimate + phosphate. The protein operates within metabolic intermediate biosynthesis; chorismate biosynthesis; chorismate from D-erythrose 4-phosphate and phosphoenolpyruvate: step 6/7. Its function is as follows. Catalyzes the transfer of the enolpyruvyl moiety of phosphoenolpyruvate (PEP) to the 5-hydroxyl of shikimate-3-phosphate (S3P) to produce enolpyruvyl shikimate-3-phosphate and inorganic phosphate. The chain is 3-phosphoshikimate 1-carboxyvinyltransferase from Chloroflexus aurantiacus (strain ATCC 29364 / DSM 637 / Y-400-fl).